The chain runs to 44 residues: Somatoliberin (44 aa).

Position 44 is a leucine amide (L44).

Belongs to the glucagon family.

It localises to the secreted. GRF is released by the hypothalamus and acts on the adenohypophyse to stimulate the secretion of growth hormone. The sequence is that of Somatoliberin (GHRH) from Capra hircus (Goat).